The sequence spans 311 residues: MTKLIFMGTPDFSATVLKGLLTDDRYEILAVVTQPDRAVGRKKVIQETPVKQAAKEAGLSIYQPEKLSGSPEMEELMKLGADGIVTAAFGQFLPSKLLDSMDFAVNVHASLLPRHRGGAPIHYALIQGDEEAGVTIMEMVKEMDAGDMISRRSIPITDEDNVGTLFEKLALVGRDLLLDTLPAYIAGDIKPEPQDTSQVTFSPNIKPEEEKLDWNKTNRQLFNQIRGMNPWPVAHTFLKGDRFKIYEALPVEGQGNPGEILSICKKELIVATAEGALSLKQVQPAGKPKMDIASFLNGVGRTLTVGERFGD.

110-113 contacts (6S)-5,6,7,8-tetrahydrofolate; the sequence is SLLP.

Belongs to the Fmt family.

The catalysed reaction is L-methionyl-tRNA(fMet) + (6R)-10-formyltetrahydrofolate = N-formyl-L-methionyl-tRNA(fMet) + (6S)-5,6,7,8-tetrahydrofolate + H(+). Its function is as follows. Attaches a formyl group to the free amino group of methionyl-tRNA(fMet). The formyl group appears to play a dual role in the initiator identity of N-formylmethionyl-tRNA by promoting its recognition by IF2 and preventing the misappropriation of this tRNA by the elongation apparatus. This is Methionyl-tRNA formyltransferase from Streptococcus pneumoniae serotype 19F (strain G54).